Consider the following 91-residue polypeptide: MKTYVLQALLLTLAVAVVRAANTGIEWPPKPQKCAEGETWKECVGSSCAELTCEHPEPSLGCTYDCNYGCYCAPDFFRNANKECVKKDKCP.

The first 20 residues, 1-20 (MKTYVLQALLLTLAVAVVRA), serve as a signal peptide directing secretion. Cystine bridges form between C34–C70, C43–C66, C48–C62, C53–C90, and C72–C84. The region spanning 34–90 (CAEGETWKECVGSSCAELTCEHPEPSLGCTYDCNYGCYCAPDFFRNANKECVKKDKC) is the TIL domain.

Belongs to the serine protease inhibitor-like (TIL domain-containing) family. In terms of tissue distribution, salivary gland. Midgut.

Its subcellular location is the secreted. In terms of biological role, tight-binding competitive inhibitor of chymotrypsin-like proteases; inhibits host chymase, cathepsin G (CTSG) and chymotrypsin. Inhibits chymase-mediated generation of vasoconstrictor peptides: angiotensin II and endothelin I. Reduces chymase-mediated vascular permeability and vascular endothelial-cadherin degradation. This Ixodes scapularis (Black-legged tick) protein is Ixochymostatin.